The following is a 236-amino-acid chain: 2,3,4,5-tetrahydropyridine-2,6-dicarboxylate N-acetyltransferase (236 aa).

The protein belongs to the transferase hexapeptide repeat family. DapH subfamily.

It carries out the reaction (S)-2,3,4,5-tetrahydrodipicolinate + acetyl-CoA + H2O = L-2-acetamido-6-oxoheptanedioate + CoA. It participates in amino-acid biosynthesis; L-lysine biosynthesis via DAP pathway; LL-2,6-diaminopimelate from (S)-tetrahydrodipicolinate (acetylase route): step 1/3. Functionally, catalyzes the transfer of an acetyl group from acetyl-CoA to tetrahydrodipicolinate. The protein is 2,3,4,5-tetrahydropyridine-2,6-dicarboxylate N-acetyltransferase of Clostridium perfringens (strain ATCC 13124 / DSM 756 / JCM 1290 / NCIMB 6125 / NCTC 8237 / Type A).